A 309-amino-acid polypeptide reads, in one-letter code: Elongator complex protein 5 (309 aa).

Phosphoserine is present on residues S3 and S4.

It belongs to the ELP5 family. As to quaternary structure, component of the elongator complex, which consists of ELP1/IKI3, ELP2, ELP3, ELP4, ELP5/IKI1 and ELP6. The elongator complex is composed of two copies of the Elp123 subcomplex (composed of ELP1/IKI3, ELP2 and ELP3) and two copies of the Elp456 subcomplex (composed of ELP4, ELP5/IKI1 and ELP6). The Elp123 subcomplex forms a two-lobed scaffold, which binds the Elp456 subcomplex asymmetrically. In each lobe, ELP2 is tightly sandwiched between ELP1/IKI3 and ELP3. The Elp123 subcomplex binds tRNA through ELP1/IKI3 and ELP3 and can bind 2 tRNAs simultaneously. tRNA-binding by the Elp123 subcomplex induces conformational rearrangements which precisely position the targeted anticodon base in the active site. The Elp456 subcomplex binds tRNA and has ATPase activity. Interacts with KTI11/DPH3.

The protein resides in the cytoplasm. Its subcellular location is the nucleus. The protein operates within tRNA modification; 5-methoxycarbonylmethyl-2-thiouridine-tRNA biosynthesis. Functionally, component of the elongator complex which is required for multiple tRNA modifications, including mcm5U (5-methoxycarbonylmethyl uridine), mcm5s2U (5-methoxycarbonylmethyl-2-thiouridine), and ncm5U (5-carbamoylmethyl uridine). The elongator complex catalyzes formation of carboxymethyluridine in the wobble base at position 34 in tRNAs. It functions as a gamma-toxin target (TOT); disruption of the complex confers resistance to Kluyveromyces lactis toxin zymocin (pGKL1 killer toxin). May also be involved in sensitivity to Pichia inositovora toxin. The sequence is that of Elongator complex protein 5 (IKI1) from Saccharomyces cerevisiae (strain ATCC 204508 / S288c) (Baker's yeast).